The chain runs to 333 residues: MTNRILDMEQMQDEEYVERTLRPQKLNEYIGQDKVKDQLKIFIEAAKLRDEALDHTLLFGPPGLGKTTMAFVIANELGVNIKQTSGPVIEKAGDLVALLNDLEPGDVLFIDEIHRMPMAVEEILYSAMEDFYIDIMIGAGEASRSVHLELPPFTLIGATTRAGMLSNPLRARFGITGHMEYYELADLTEIVERTADIFDMEITHEAAIELARRSRGTPRIANRLLKRVRDFAQIMGDGLIDDSITDKALTMLDVDREGLDYVDQKILRTMIEMYGGGPVGLNTLSVNIAEERETVEDMYEPYLIQQGFLMRTRTGRVATAKAYEHLGYPYTEK.

The segment at 1–182 (MTNRILDMEQ…FGITGHMEYY (182 aa)) is large ATPase domain (RuvB-L). Residues L21, R22, G63, K66, T67, T68, 129–131 (EDF), R172, Y182, and R219 contribute to the ATP site. T67 contributes to the Mg(2+) binding site. The interval 183 to 253 (ELADLTEIVE…ITDKALTMLD (71 aa)) is small ATPAse domain (RuvB-S). The interval 256–333 (REGLDYVDQK…EHLGYPYTEK (78 aa)) is head domain (RuvB-H). DNA contacts are provided by R292, R311, R313, and R316.

This sequence belongs to the RuvB family. In terms of assembly, homohexamer. Forms an RuvA(8)-RuvB(12)-Holliday junction (HJ) complex. HJ DNA is sandwiched between 2 RuvA tetramers; dsDNA enters through RuvA and exits via RuvB. An RuvB hexamer assembles on each DNA strand where it exits the tetramer. Each RuvB hexamer is contacted by two RuvA subunits (via domain III) on 2 adjacent RuvB subunits; this complex drives branch migration. In the full resolvosome a probable DNA-RuvA(4)-RuvB(12)-RuvC(2) complex forms which resolves the HJ.

Its subcellular location is the cytoplasm. The catalysed reaction is ATP + H2O = ADP + phosphate + H(+). The RuvA-RuvB-RuvC complex processes Holliday junction (HJ) DNA during genetic recombination and DNA repair, while the RuvA-RuvB complex plays an important role in the rescue of blocked DNA replication forks via replication fork reversal (RFR). RuvA specifically binds to HJ cruciform DNA, conferring on it an open structure. The RuvB hexamer acts as an ATP-dependent pump, pulling dsDNA into and through the RuvAB complex. RuvB forms 2 homohexamers on either side of HJ DNA bound by 1 or 2 RuvA tetramers; 4 subunits per hexamer contact DNA at a time. Coordinated motions by a converter formed by DNA-disengaged RuvB subunits stimulates ATP hydrolysis and nucleotide exchange. Immobilization of the converter enables RuvB to convert the ATP-contained energy into a lever motion, pulling 2 nucleotides of DNA out of the RuvA tetramer per ATP hydrolyzed, thus driving DNA branch migration. The RuvB motors rotate together with the DNA substrate, which together with the progressing nucleotide cycle form the mechanistic basis for DNA recombination by continuous HJ branch migration. Branch migration allows RuvC to scan DNA until it finds its consensus sequence, where it cleaves and resolves cruciform DNA. The chain is Holliday junction branch migration complex subunit RuvB from Streptococcus suis (strain 98HAH33).